A 511-amino-acid polypeptide reads, in one-letter code: Probable G-protein coupled receptor 101 (511 aa).

Over 1 to 35 (MPPSCTNSTQENNGSRVCLPLSKMPISVAHGIIRS) the chain is Extracellular. Residues Asn7 and Asn13 are each glycosylated (N-linked (GlcNAc...) asparagine). The helical transmembrane segment at 36–56 (VVLLVILGVAFLGNVVLGYVL) threads the bilayer. The Cytoplasmic portion of the chain corresponds to 57–67 (HRKPNLLQVTN). Residues 68 to 90 (RFIFNLLVTDLLQVALVAPWVVS) form a helical membrane-spanning segment. Residues 91-106 (TAIPFFWPLNIHFCTA) lie on the Extracellular side of the membrane. The cysteines at positions 104 and 182 are disulfide-linked. Residues 107 to 127 (LVSLTHLFAFASVNTIVVVSV) form a helical membrane-spanning segment. Residues 128–149 (DRYLTIIHPLSYPSKMTNRRSY) are Cytoplasmic-facing. The chain crosses the membrane as a helical span at residues 150–170 (ILLYGTWIAAFLQSTPPLYGW). Residues 171-196 (GHATFDDRNAFCSMIWGASPAYTVVS) lie on the Extracellular side of the membrane. The helical transmembrane segment at 197 to 217 (VVSFLVIPLGVMIACYSVVFG) threads the bilayer. Over 218 to 398 (AARRQQALLY…PPCYECKAAR (181 aa)) the chain is Cytoplasmic. Residues 240–261 (DSVVHENEEGAKKRDEFQDKNE) are compositionally biased toward basic and acidic residues. Disordered stretches follow at residues 240–315 (DSVV…EVSN) and 367–386 (EAMR…TSDP). Polar residues predominate over residues 376–385 (PPSRRNSTSD). The chain crosses the membrane as a helical span at residues 399-419 (VIFVIISTYVLSLGPYCFLAV). Topologically, residues 420 to 432 (LAVWVDIDTRVPQ) are extracellular. Residues 433-453 (WVITIIIWLFFLQCCIHPYVY) traverse the membrane as a helical segment. Over 454 to 511 (GYMHKSIKKEIQEVLKKLICKKSPPVEDSHPDLHETEAGTEGGIEGKAVPSHDSATSP) the chain is Cytoplasmic. The disordered stretch occupies residues 476 to 511 (SPPVEDSHPDLHETEAGTEGGIEGKAVPSHDSATSP). Basic and acidic residues predominate over residues 477–490 (PPVEDSHPDLHETE).

The protein belongs to the G-protein coupled receptor 1 family. As to expression, expressed in the brain in hypothalamus.

The protein localises to the cell membrane. In terms of biological role, orphan receptor. The protein is Probable G-protein coupled receptor 101 (Gpr101) of Mus musculus (Mouse).